A 156-amino-acid polypeptide reads, in one-letter code: Cyanate hydratase (156 aa).

Residues arginine 96, glutamate 99, and serine 122 contribute to the active site.

It belongs to the cyanase family.

It carries out the reaction cyanate + hydrogencarbonate + 3 H(+) = NH4(+) + 2 CO2. In terms of biological role, catalyzes the reaction of cyanate with bicarbonate to produce ammonia and carbon dioxide. The polypeptide is Cyanate hydratase (Pseudomonas aeruginosa (strain UCBPP-PA14)).